Here is a 352-residue protein sequence, read N- to C-terminus: Invasion chromosome antigen T (352 aa).

The protein belongs to the IcaT/YfdF family.

The protein localises to the secreted. In terms of biological role, may contribute to pathogenesis, although some of its characteristics suggest it is a fossil gene. This is Invasion chromosome antigen T from Shigella flexneri serotype 5a (strain M90T).